We begin with the raw amino-acid sequence, 137 residues long: Allergen Ulo b 1 (137 aa).

The signal sequence occupies residues 1-11; it reads SLFAAAGLAAA. Residues 28–137 enclose the AA1-like domain; sequence QGDYVWKISE…PKDFVCQGVS (110 aa). 2 disulfides stabilise this stretch: cysteine 67–cysteine 82 and cysteine 121–cysteine 133.

It belongs to the ALTA1 family. In terms of assembly, homodimer; disulfide-linked.

The protein resides in the secreted. In Alternaria botrytis (Ulocladium botrytis), this protein is Allergen Ulo b 1.